Consider the following 213-residue polypeptide: Uridine kinase (213 aa).

15 to 22 (GASASGKS) is a binding site for ATP.

Belongs to the uridine kinase family.

The protein localises to the cytoplasm. It catalyses the reaction uridine + ATP = UMP + ADP + H(+). The enzyme catalyses cytidine + ATP = CMP + ADP + H(+). Its pathway is pyrimidine metabolism; CTP biosynthesis via salvage pathway; CTP from cytidine: step 1/3. It participates in pyrimidine metabolism; UMP biosynthesis via salvage pathway; UMP from uridine: step 1/1. This chain is Uridine kinase, found in Escherichia coli O157:H7.